The sequence spans 257 residues: Large ribosomal subunit protein bL28m (257 aa).

The N-terminal 55 residues, 1–55 (MPLHRYPVHLWQKLRLRQGICARLPAHFLRSLEEERTPTPVHYKPHGTKFKINPK), are a transit peptide targeting the mitochondrion.

This sequence belongs to the bacterial ribosomal protein bL28 family. As to quaternary structure, component of the mitochondrial ribosome large subunit (39S) which comprises a 16S rRNA and about 50 distinct proteins. Interacts with OXA1L.

It is found in the mitochondrion. In Mus musculus (Mouse), this protein is Large ribosomal subunit protein bL28m (Mrpl28).